The primary structure comprises 685 residues: Polyphosphate kinase (685 aa).

N45 provides a ligand contact to ATP. 2 residues coordinate Mg(2+): R375 and R405. Catalysis depends on H435, which acts as the Phosphohistidine intermediate. Residues Y468, R564, and H592 each contribute to the ATP site.

It belongs to the polyphosphate kinase 1 (PPK1) family. Requires Mg(2+) as cofactor. In terms of processing, an intermediate of this reaction is the autophosphorylated ppk in which a phosphate is covalently linked to a histidine residue through a N-P bond.

The catalysed reaction is [phosphate](n) + ATP = [phosphate](n+1) + ADP. Its function is as follows. Catalyzes the reversible transfer of the terminal phosphate of ATP to form a long-chain polyphosphate (polyP). This chain is Polyphosphate kinase, found in Neisseria meningitidis serogroup C (strain 053442).